A 321-amino-acid polypeptide reads, in one-letter code: MISVNEMGSNVIEEMLDWSEDLKTEVLKLNNGATVIDCGVKAEGGYEAGMYLARLCLADLADLKYTTFDLNGLKWPAIQVATDNPVIACMASQYAGWRISVGNYFGMGSGPARALGLKPKELYEEIGYEDDFEAAVLVMESDKLPDEKVVEFIAKHCSVDPENVMIAVAPTASIAGSVQISARVVETGIHKFESVGFDINCIKSGYGVAPIAPVVGKDVQCMGSTNDCVIYCGETNYTVRFDGELAELEEFVKKVPSTTSQDFGKPFYQTFKEANFDFFKVDAGMFAPARLTVNDLNSTKTISSGGLYPEILLQSFGIRNV.

It belongs to the MCH family.

The protein resides in the cytoplasm. The catalysed reaction is 5,10-methenyl-5,6,7,8-tetrahydromethanopterin + H2O = N(5)-formyl-5,6,7,8-tetrahydromethanopterin + H(+). Its pathway is one-carbon metabolism; methanogenesis from CO(2); 5,10-methenyl-5,6,7,8-tetrahydromethanopterin from CO(2): step 3/3. Its function is as follows. Catalyzes the reversible interconversion of 5-formyl-H(4)MPT to methenyl-H(4)MPT(+). This chain is Methenyltetrahydromethanopterin cyclohydrolase (mch), found in Methanosarcina barkeri (strain Fusaro / DSM 804).